We begin with the raw amino-acid sequence, 668 residues long: Eukaryotic translation initiation factor 3 subunit L (668 aa).

Polar residues predominate over residues 1–17 (MVADASQQGQSNGAAFN). The interval 1–42 (MVADASQQGQSNGAAFNQQQQYQQQQQRQLFGGEEEFGDEEE) is disordered. Residues 18-32 (QQQQYQQQQQRQLFG) show a composition bias toward low complexity. Positions 33-42 (GEEEFGDEEE) are enriched in acidic residues. One can recognise a PCI domain in the interval 358 to 552 (SFTHILVFIM…QVVNTSDLDF (195 aa)). Residues 625-668 (AGVKAGPPAFSQRSGGAGRSSVNKSAPAPAGAWGSSKPQPSVTA) form a disordered region. Positions 648-662 (KSAPAPAGAWGSSKP) are enriched in low complexity.

This sequence belongs to the eIF-3 subunit L family. Component of the eukaryotic translation initiation factor 3 (eIF-3) complex.

Its subcellular location is the cytoplasm. In terms of biological role, component of the eukaryotic translation initiation factor 3 (eIF-3) complex, which is involved in protein synthesis of a specialized repertoire of mRNAs and, together with other initiation factors, stimulates binding of mRNA and methionyl-tRNAi to the 40S ribosome. The eIF-3 complex specifically targets and initiates translation of a subset of mRNAs involved in cell proliferation. This is Eukaryotic translation initiation factor 3 subunit L from Mycosarcoma maydis (Corn smut fungus).